Consider the following 212-residue polypeptide: ER lumen protein-retaining receptor 2 (212 aa).

Over Met-1–Phe-4 the chain is Lumenal. The chain crosses the membrane as a helical span at residues Arg-5 to Trp-24. Topologically, residues Lys-25–Ile-32 are cytoplasmic. The helical transmembrane segment at Ser-33–Leu-52 threads the bilayer. Positions Arg-47 to Tyr-48 are interaction with the K-D-E-L motif on target proteins. Topologically, residues Thr-53–Leu-58 are lumenal. The chain crosses the membrane as a helical span at residues Tyr-59–Tyr-79. Residues Ala-80 to Thr-92 lie on the Cytoplasmic side of the membrane. The chain crosses the membrane as a helical span at residues Phe-93–Asn-110. At His-111–Leu-116 the chain is on the lumenal side. Residues Glu-117–Leu-135 traverse the membrane as a helical segment. The Cytoplasmic segment spans residues Phe-136–Thr-149. The helical transmembrane segment at His-150–Trp-168 threads the bilayer. Residues Arg-159–Arg-169 form an interaction with the K-D-E-L motif on target proteins region. Residues Arg-169–Met-178 lie on the Lumenal side of the membrane. The chain crosses the membrane as a helical span at residues Ile-179–Val-199. Residues Thr-200 to Ala-212 lie on the Cytoplasmic side of the membrane. Residues Lys-204–Lys-207 form an important for recycling of cargo proteins with the sequence motif K-D-E-L from the Golgi to the endoplasmic reticulum region.

This sequence belongs to the ERD2 family.

The protein resides in the endoplasmic reticulum membrane. The protein localises to the golgi apparatus membrane. It localises to the cytoplasmic vesicle. It is found in the COPI-coated vesicle membrane. In terms of biological role, receptor for the C-terminal sequence motif K-D-E-L that is present on endoplasmic reticulum resident proteins and that mediates their recycling from the Golgi back to the endoplasmic reticulum. Binding is pH dependent, and is optimal at pH 5-5.4. The sequence is that of ER lumen protein-retaining receptor 2 (kdelr2) from Danio rerio (Zebrafish).